Consider the following 476-residue polypeptide: 3-isopropylmalate dehydratase large subunit (476 aa).

Residues C357, C417, and C420 each coordinate [4Fe-4S] cluster.

Belongs to the aconitase/IPM isomerase family. LeuC type 1 subfamily. As to quaternary structure, heterodimer of LeuC and LeuD. [4Fe-4S] cluster is required as a cofactor.

It catalyses the reaction (2R,3S)-3-isopropylmalate = (2S)-2-isopropylmalate. It participates in amino-acid biosynthesis; L-leucine biosynthesis; L-leucine from 3-methyl-2-oxobutanoate: step 2/4. Its function is as follows. Catalyzes the isomerization between 2-isopropylmalate and 3-isopropylmalate, via the formation of 2-isopropylmaleate. The protein is 3-isopropylmalate dehydratase large subunit of Mycobacterium leprae (strain TN).